The following is a 91-amino-acid chain: Acylphosphatase (91 aa).

In terms of domain architecture, Acylphosphatase-like spans 3–91 (CLRAIVKGKV…ANYSDFRIKH (89 aa)). Residues Arg18 and Asn36 contribute to the active site.

It belongs to the acylphosphatase family.

It carries out the reaction an acyl phosphate + H2O = a carboxylate + phosphate + H(+). This is Acylphosphatase (acyP) from Dehalococcoides mccartyi (strain ATCC BAA-2100 / JCM 16839 / KCTC 5957 / BAV1).